Here is an 85-residue protein sequence, read N- to C-terminus: Large ribosomal subunit protein bL27 (85 aa).

The tract at residues 1–20 is disordered; the sequence is MAHKKAGGSTRNGRDSEAKR.

It belongs to the bacterial ribosomal protein bL27 family.

This is Large ribosomal subunit protein bL27 from Proteus mirabilis (strain HI4320).